The chain runs to 125 residues: Phosphoribosyl-AMP cyclohydrolase (125 aa).

D74 is a binding site for Mg(2+). C75 contacts Zn(2+). Mg(2+) contacts are provided by D76 and D78. Zn(2+) is bound by residues C92 and C99.

The protein belongs to the PRA-CH family. In terms of assembly, homodimer. Mg(2+) is required as a cofactor. The cofactor is Zn(2+).

The protein resides in the cytoplasm. It carries out the reaction 1-(5-phospho-beta-D-ribosyl)-5'-AMP + H2O = 1-(5-phospho-beta-D-ribosyl)-5-[(5-phospho-beta-D-ribosylamino)methylideneamino]imidazole-4-carboxamide. Its pathway is amino-acid biosynthesis; L-histidine biosynthesis; L-histidine from 5-phospho-alpha-D-ribose 1-diphosphate: step 3/9. Catalyzes the hydrolysis of the adenine ring of phosphoribosyl-AMP. This chain is Phosphoribosyl-AMP cyclohydrolase, found in Geobacter sp. (strain M21).